A 200-amino-acid polypeptide reads, in one-letter code: Superoxide dismutase [Mn] (200 aa).

The Mn(2+) site is built by His27, His77, Asp160, and His164.

This sequence belongs to the iron/manganese superoxide dismutase family. Homodimer. The cofactor is Mn(2+).

It catalyses the reaction 2 superoxide + 2 H(+) = H2O2 + O2. Its function is as follows. Destroys superoxide anion radicals which are normally produced within the cells and which are toxic to biological systems. The polypeptide is Superoxide dismutase [Mn] (sodB) (Rhizobium meliloti (strain 1021) (Ensifer meliloti)).